A 513-amino-acid polypeptide reads, in one-letter code: uncharacterized protein (513 aa).

One can recognise a TRAM domain in the interval 3 to 61 (NLKIGQKLQLEIERMGINGEGIGVISGRLVFIPYALPGEEVLVEITENARNFSRAKLVK). Positions 309, 338, 359, and 407 each coordinate S-adenosyl-L-methionine. Residue Cys-434 is the Nucleophile of the active site.

The protein belongs to the class I-like SAM-binding methyltransferase superfamily. RNA M5U methyltransferase family.

This is an uncharacterized protein from Lactococcus lactis subsp. lactis (strain IL1403) (Streptococcus lactis).